A 488-amino-acid chain; its full sequence is Probable apyrase 5 (488 aa).

The disordered stretch occupies residues 1 to 26 (MDALKVQILPDNQSSPSSTHMLTKPK). Residues 1-32 (MDALKVQILPDNQSSPSSTHMLTKPKSKKATK) lie on the Cytoplasmic side of the membrane. Polar residues predominate over residues 10 to 21 (PDNQSSPSSTHM). Residues 33-53 (SIAMLIVASLAITLGLLFVFS) traverse the membrane as a helical; Signal-anchor for type II membrane protein segment. At 54–488 (SNSVMFSASF…GKSRKMIGFK (435 aa)) the chain is on the extracellular side. An ATP-binding site is contributed by 73–83 (VIIDAGSSGTR). The active-site Proton acceptor is glutamate 196. Residue 220-230 (GIVELGGASAQ) coordinates ATP. A glycan (N-linked (GlcNAc...) asparagine) is linked at asparagine 251.

It belongs to the GDA1/CD39 NTPase family. The cofactor is Ca(2+). As to expression, highly expressed in young rosette leaves but only weakly in roots.

It is found in the membrane. The catalysed reaction is a ribonucleoside 5'-triphosphate + 2 H2O = a ribonucleoside 5'-phosphate + 2 phosphate + 2 H(+). In terms of biological role, catalyzes the hydrolysis of phosphoanhydride bonds of nucleoside tri- and di-phosphates. The chain is Probable apyrase 5 (APY5) from Arabidopsis thaliana (Mouse-ear cress).